The sequence spans 755 residues: uncharacterized protein (755 aa).

Disordered stretches follow at residues 1 to 44 (MAAP…AAAQ), 72 to 91 (AEHSFSTLPPETGSVGATAQ), 99 to 174 (FSLS…IPHY), 393 to 467 (TTNV…SSSR), 523 to 545 (LPKTTGDTDPSGQATGGVTEGGG), 584 to 672 (VSSS…LPSG), and 734 to 755 (QAATAGSQPSSRRSSPTSPRRK). Low complexity-rich tracts occupy residues 10–25 (TTTQITQTGQTTTTTT) and 35–44 (TTTGSGAAAQ). Composition is skewed to low complexity over residues 112 to 130 (ISSSSDGSSISRTSSNASS), 139 to 151 (SPDLGDLDSLSGS), and 393 to 412 (TTNVTTEEGGGTNITSTKST). Positions 429 to 446 (IEEDTIQFDDPGQGEDDN) are enriched in acidic residues. A compositionally biased stretch (pro residues) spans 452–462 (NTPPPPGPPPN). Residues 536–545 (ATGGVTEGGG) are compositionally biased toward gly residues. Polar residues predominate over residues 590–599 (LPQPQVATTI). Composition is skewed to low complexity over residues 600 to 666 (TPQA…QTPQ) and 740 to 755 (SQPSSRRSSPTSPRRK).

The protein belongs to the chlamydial CPn_0572/CT_456/TC_0741 family.

This is an uncharacterized protein from Chlamydia pneumoniae (Chlamydophila pneumoniae).